The primary structure comprises 452 residues: tRNA modification GTPase MnmE (452 aa).

Positions 21, 82, and 121 each coordinate (6S)-5-formyl-5,6,7,8-tetrahydrofolate. The TrmE-type G domain maps to 214 to 372; sequence GARVVLVGRP…LAKTIATTLL (159 aa). Residue Asn-224 coordinates K(+). GTP is bound by residues 224–229, 243–249, 268–271, and 353–355; these read NVGKSS, TPIPGTT, DTAG, and SAR. Ser-228 provides a ligand contact to Mg(2+). Residues Thr-243, Ile-245, and Thr-248 each contribute to the K(+) site. Thr-249 contributes to the Mg(2+) binding site. Lys-452 serves as a coordination point for (6S)-5-formyl-5,6,7,8-tetrahydrofolate.

It belongs to the TRAFAC class TrmE-Era-EngA-EngB-Septin-like GTPase superfamily. TrmE GTPase family. In terms of assembly, homodimer. Heterotetramer of two MnmE and two MnmG subunits. Requires K(+) as cofactor.

The protein localises to the cytoplasm. In terms of biological role, exhibits a very high intrinsic GTPase hydrolysis rate. Involved in the addition of a carboxymethylaminomethyl (cmnm) group at the wobble position (U34) of certain tRNAs, forming tRNA-cmnm(5)s(2)U34. This Chloroflexus aurantiacus (strain ATCC 29366 / DSM 635 / J-10-fl) protein is tRNA modification GTPase MnmE.